We begin with the raw amino-acid sequence, 97 residues long: Co-chaperonin GroES (97 aa).

This sequence belongs to the GroES chaperonin family. In terms of assembly, heptamer of 7 subunits arranged in a ring. Interacts with the chaperonin GroEL.

Its subcellular location is the cytoplasm. Functionally, together with the chaperonin GroEL, plays an essential role in assisting protein folding. The GroEL-GroES system forms a nano-cage that allows encapsulation of the non-native substrate proteins and provides a physical environment optimized to promote and accelerate protein folding. GroES binds to the apical surface of the GroEL ring, thereby capping the opening of the GroEL channel. The sequence is that of Co-chaperonin GroES from Aeromonas hydrophila subsp. hydrophila (strain ATCC 7966 / DSM 30187 / BCRC 13018 / CCUG 14551 / JCM 1027 / KCTC 2358 / NCIMB 9240 / NCTC 8049).